The chain runs to 223 residues: Ribosome maturation factor RimM (223 aa).

The PRC barrel domain maps to 142–223 (ADEFYWVDLI…RIVVDWEADY (82 aa)).

The protein belongs to the RimM family. Binds ribosomal protein uS19.

It is found in the cytoplasm. Its function is as follows. An accessory protein needed during the final step in the assembly of 30S ribosomal subunit, possibly for assembly of the head region. Essential for efficient processing of 16S rRNA. May be needed both before and after RbfA during the maturation of 16S rRNA. It has affinity for free ribosomal 30S subunits but not for 70S ribosomes. The chain is Ribosome maturation factor RimM from Burkholderia multivorans (strain ATCC 17616 / 249).